The primary structure comprises 280 residues: Tryptophan synthase alpha chain (280 aa).

Active-site proton acceptor residues include E50 and D61.

It belongs to the TrpA family. As to quaternary structure, tetramer of two alpha and two beta chains.

It catalyses the reaction (1S,2R)-1-C-(indol-3-yl)glycerol 3-phosphate + L-serine = D-glyceraldehyde 3-phosphate + L-tryptophan + H2O. Its pathway is amino-acid biosynthesis; L-tryptophan biosynthesis; L-tryptophan from chorismate: step 5/5. Functionally, the alpha subunit is responsible for the aldol cleavage of indoleglycerol phosphate to indole and glyceraldehyde 3-phosphate. In Methylorubrum extorquens (strain PA1) (Methylobacterium extorquens), this protein is Tryptophan synthase alpha chain.